Consider the following 73-residue polypeptide: Ocellatin-PT6 (73 aa).

Residues 1–22 (MAFLKKSLFLVLFLGLVSLSIC) form the signal peptide. A propeptide spanning residues 23 to 39 (DEEKRQDEDDDDDDDEE) is cleaved from the precursor.

Expressed by the skin glands.

Its subcellular location is the secreted. Its function is as follows. Has antibacterial activity against Gram-negative bacterium E.coli ATCC 25922 (MIC=120 uM) but not against S.pneumoniae ATCC 700603, S.choleraesuis ATCC 14028 or against Gram-positive bacterium S.aureus ATCC 29313. Shows no hemolytic activity and no cytotoxicity. The protein is Ocellatin-PT6 of Leptodactylus pustulatus (Ceara white-lipped frog).